Here is a 244-residue protein sequence, read N- to C-terminus: Thiol S-methyltransferase TMT1B (244 aa).

An N-terminal signal peptide occupies residues 1–23; sequence MDVLVPLLQLLVLLLTLPLHLLA.

It belongs to the methyltransferase superfamily. In terms of tissue distribution, highly expressed in liver and kidney. No expression in testis, heart, lung, brain, spleen or cultured fibroblasts.

The protein localises to the endoplasmic reticulum membrane. The protein resides in the lipid droplet. It is found in the microsome. It localises to the cytoplasm. Its subcellular location is the cytosol. It catalyses the reaction a thiol + S-adenosyl-L-methionine = a methyl thioether + S-adenosyl-L-homocysteine + H(+). In terms of biological role, thiol S-methyltransferase that catalyzes the transfer of a methyl group from S-adenosyl-L-methionine to alkyl and phenolic thiol-containing acceptor substrates. Together with TMT1B accounts for most of S-thiol methylation activity in the endoplasmic reticulum of hepatocytes. Selectively methylates S-centered nucleophiles from metabolites such as hydrogen sulfide and dithiothreitol. In Rattus norvegicus (Rat), this protein is Thiol S-methyltransferase TMT1B (Tmt1b).